The sequence spans 446 residues: Transcription factor SOX-3 (446 aa).

Disordered stretches follow at residues 29–48 and 87–140; these read PFPP…TESQ and PVGT…DRVK. Gly residues-rich tracts occupy residues 96 to 107 and 117 to 134; these read GTGGPAAPGGAG and ANSG…GGGT. The segment at residues 139–207 is a DNA-binding region (HMG box); the sequence is VKRPMNAFMV…VHMKEYPDYK (69 aa). Residues 399–407 carry the 9aaTAD motif; that stretch reads DMISMYLPP.

In terms of assembly, interacts with SOX2 and FGFR1.

It is found in the nucleus. Transcription factor required during the formation of the hypothalamo-pituitary axis. May function as a switch in neuronal development. Keeps neural cells undifferentiated by counteracting the activity of proneural proteins and suppresses neuronal differentiation. Required also within the pharyngeal epithelia for craniofacial morphogenesis. Controls a genetic switch in male development. Is necessary for initiating male sex determination by directing the development of supporting cell precursors (pre-Sertoli cells) as Sertoli rather than granulosa cells. This chain is Transcription factor SOX-3 (SOX3), found in Homo sapiens (Human).